The chain runs to 343 residues: Methionine import ATP-binding protein MetN 1 (343 aa).

Residues 2 to 241 (IKLTHISKVF…PKTPLAQQFI (240 aa)) enclose the ABC transporter domain. 38-45 (GASGAGKS) serves as a coordination point for ATP.

It belongs to the ABC transporter superfamily. Methionine importer (TC 3.A.1.24) family. As to quaternary structure, the complex is composed of two ATP-binding proteins (MetN), two transmembrane proteins (MetI) and a solute-binding protein (MetQ).

The protein localises to the cell inner membrane. It catalyses the reaction L-methionine(out) + ATP + H2O = L-methionine(in) + ADP + phosphate + H(+). The catalysed reaction is D-methionine(out) + ATP + H2O = D-methionine(in) + ADP + phosphate + H(+). Its function is as follows. Part of the ABC transporter complex MetNIQ involved in methionine import. Responsible for energy coupling to the transport system. The polypeptide is Methionine import ATP-binding protein MetN 1 (Yersinia pestis bv. Antiqua (strain Antiqua)).